Consider the following 492-residue polypeptide: Spore germination protein XA (492 aa).

Transmembrane regions (helical) follow at residues 246 to 266, 285 to 305, 325 to 345, 353 to 373, 377 to 397, 413 to 433, and 442 to 462; these read FILLVDGSPTATIAPVSFPFF, LLSLFGIAISIFLPGFWVALV, EGIPFPAPLEGMIMITLFELL, PAAFGQTLSVVGGLIIGQAAI, FVSPSMVVMIAISVVSTFTLV, FLMSSFLGIVGFICSILLIVI, and GLPFLAPYSPPVFSSMLPSTF.

The protein belongs to the GerABKA family.

It localises to the cell membrane. May allow B.anthracis to germinate within phagocytic cells and therefore involved in virulence. The chain is Spore germination protein XA (gerXA) from Bacillus anthracis.